The chain runs to 475 residues: tRNA-2-methylthio-N(6)-dimethylallyladenosine synthase (475 aa).

Positions 7–127 (RKLHIKSYGC…LPKLLAKARD (121 aa)) constitute an MTTase N-terminal domain. C16, C52, C90, C168, C172, and C175 together coordinate [4Fe-4S] cluster. The region spanning 154-388 (RARGVSAFVT…AQLQALIDAQ (235 aa)) is the Radical SAM core domain. A TRAM domain is found at 394 to 456 (RAAIGRTVEV…RYSLKGRLAS (63 aa)).

This sequence belongs to the methylthiotransferase family. MiaB subfamily. As to quaternary structure, monomer. The cofactor is [4Fe-4S] cluster.

It localises to the cytoplasm. It carries out the reaction N(6)-dimethylallyladenosine(37) in tRNA + (sulfur carrier)-SH + AH2 + 2 S-adenosyl-L-methionine = 2-methylsulfanyl-N(6)-dimethylallyladenosine(37) in tRNA + (sulfur carrier)-H + 5'-deoxyadenosine + L-methionine + A + S-adenosyl-L-homocysteine + 2 H(+). Functionally, catalyzes the methylthiolation of N6-(dimethylallyl)adenosine (i(6)A), leading to the formation of 2-methylthio-N6-(dimethylallyl)adenosine (ms(2)i(6)A) at position 37 in tRNAs that read codons beginning with uridine. The sequence is that of tRNA-2-methylthio-N(6)-dimethylallyladenosine synthase from Afipia carboxidovorans (strain ATCC 49405 / DSM 1227 / KCTC 32145 / OM5) (Oligotropha carboxidovorans).